The sequence spans 316 residues: Putative HTH-type transcriptional regulatory protein PYRAB03670 (316 aa).

The HTH cro/C1-type domain maps to Leu-131–Leu-189. The H-T-H motif DNA-binding region spans Leu-142–Lys-161.

The protein is Putative HTH-type transcriptional regulatory protein PYRAB03670 of Pyrococcus abyssi (strain GE5 / Orsay).